We begin with the raw amino-acid sequence, 784 residues long: MQRLTELATALGAFLGLLAVAAMAGPNFPQIDTPNMLPAHHRQKRDWIWNQMHIDEEKNESLPHYVGKIKSNVNRQNAKYVLQGEFAGKIFGVDANTGNVLAYERLDREKVSEYFLTALIVDKNTNKNLEQPSSFTVKVHDINDNWPVFSHQVFNASVPEMSAIGTSVIRVTAVDADDPTVAGHATVLYQIVKGNEYFSIDNSGLIFTKIKNLDREKQAEYKIVVETQDALGLRGESGTATVMIRLEDINDNFPVFTQSTYTFSVPEDIRVGKPLGFLTVVDPDEPQNRMTKYSIMQGEYRDTFTIETDPKRNEGIIKPTKSLDYEVIQQYTFYIEATDPTIRYEYLSSTSGKNKAMVTINVLDVDEPPVFQRHFYHFKLPENQKKPLIGTVVAKDPDKAQRSIGYSIRKTSDRGQFFRITKQGNIYNEKELDRETYAWYNLTVEANELDSRGNPVGKESIVQVYIEVLDENDNPPEFAQPYEPKVCENAAQGKLVVQISATDKDVVPVNPKFKFALKNEDSNFTLINNHDNTANITVKYGQFNREHAKFHYLPVLISDNGVPSLTGTSTLTVGVCKCNEQGEFTFCEEMAAQAGVSIQALVAIFLCILTITVITLLIILRRRIRKQAHAHSKSALEIHEQLVTYDEEGGGEMDTTSYDVSVLNSVRGGSTKPLRSTMDARPAVYTQVQKPPRLAPGLHGGPREMATMIDVKKEEADNDGGGPPYDTLHIYGYEGAESIAESLSSLSTNSSDSDIDYDFLNDWGPRFKMLAELYGSDPQEELII.

Residues 1 to 24 (MQRLTELATALGAFLGLLAVAAMA) form the signal peptide. The propeptide occupies 25 to 45 (GPNFPQIDTPNMLPAHHRQKR). Cadherin domains lie at 46–149 (DWIW…WPVF), 150–256 (SHQV…FPVF), 257–371 (TQST…PPVF), 372–476 (QRHF…DNPP), and 477–593 (EFAQ…MAAQ). Topologically, residues 46–599 (DWIWNQMHID…MAAQAGVSIQ (554 aa)) are extracellular. Residues Glu56 and Glu57 each contribute to the Ca(2+) site. An N-linked (GlcNAc...) asparagine glycan is attached at Asn59. Ca(2+) is bound by residues Asp107, Glu109, Asp141, Ile142, Asn143, Asp144, and Asn145. N-linked (GlcNAc...) asparagine glycosylation occurs at Asn155. Residues Asp175, Asp177, His184, and Asp229 each coordinate Ca(2+). N-linked (GlcNAc...) asparagine glycans are attached at residues Asn441, Asn523, and Asn535. The chain crosses the membrane as a helical span at residues 600 to 620 (ALVAIFLCILTITVITLLIIL). Residues 621–660 (RRRIRKQAHAHSKSALEIHEQLVTYDEEGGGEMDTTSYDV) are required for interaction with PALS1. Residues 621–784 (RRRIRKQAHA…GSDPQEELII (164 aa)) lie on the Cytoplasmic side of the membrane.

Part of a complex composed of AMOTL2, MAGI1 and CDH5, within the complex AMOTL2 acts as a scaffold protein for the interaction of MAGI1 with CDH5. The complex is required for coupling actin fibers to cell junctions in endothelial cells. Within the complex AMOTL2 (via its N-terminus) interacts with CDH5. Interacts (via cadherin 5 domain) with PTPRB. Interacts with TRPC4. Interacts with KRIT1. Interacts with PARD3. Interacts with RTN4 (isoform B). Interacts with PALS1; the interaction promotes PALS1 localization to cell junctions and is required for CDH5-mediated vascular lumen formation and endothelial cell polarity. Interacts with CTNND1/p120-catenin; the interaction controls CADH5 endocytosis. Post-translationally, phosphorylated on tyrosine residues by KDR/VEGFR-2. Dephosphorylated by PTPRB. In terms of processing, O-glycosylated. As to expression, expressed in postnatal endothelial cells of the retinal vascular plexus (at protein level).

The protein resides in the cell junction. Its subcellular location is the adherens junction. It is found in the cell membrane. It localises to the cytoplasm. Its function is as follows. Cadherins are calcium-dependent cell adhesion proteins. They preferentially interact with themselves in a homophilic manner in connecting cells; cadherins may thus contribute to the sorting of heterogeneous cell types. This cadherin may play an important role in endothelial cell biology through control of the cohesion and organization of the intercellular junctions. It associates with alpha-catenin forming a link to the cytoskeleton. Plays a role in coupling actin fibers to cell junctions in endothelial cells, via acting as a cell junctional complex anchor for AMOTL2 and MAGI1. Acts in concert with KRIT1 and PALS1 to establish and maintain correct endothelial cell polarity and vascular lumen. These effects are mediated by recruitment and activation of the Par polarity complex and RAP1B. Required for activation of PRKCZ and for localization of phosphorylated PRKCZ, PARD3, TIAM1 and RAP1B to the cell junction. Associates with CTNND1/p120-catenin to control CADH5 endocytosis. In Mus musculus (Mouse), this protein is Cadherin-5.